The chain runs to 194 residues: MFIPYVIEKSSRGERSYDIYSRLLKDRIIMLSGEIHDELAASIVAQLLFLEAEDPTKDIYLYINSPGGVITSGFSIYDTMNYIKPDVCTICIGQAASMGAFLLSCGAEGKRFALPNSRIMIHQPLGGARGQATDIEIQAKEILRLKTILNDILAKNTKQKVAKIAKDTERDFFMSTQEAKEYGLIDKVLEKSFK.

Ser97 acts as the Nucleophile in catalysis. His122 is an active-site residue.

It belongs to the peptidase S14 family. Fourteen ClpP subunits assemble into 2 heptameric rings which stack back to back to give a disk-like structure with a central cavity, resembling the structure of eukaryotic proteasomes.

It is found in the cytoplasm. The enzyme catalyses Hydrolysis of proteins to small peptides in the presence of ATP and magnesium. alpha-casein is the usual test substrate. In the absence of ATP, only oligopeptides shorter than five residues are hydrolyzed (such as succinyl-Leu-Tyr-|-NHMec, and Leu-Tyr-Leu-|-Tyr-Trp, in which cleavage of the -Tyr-|-Leu- and -Tyr-|-Trp bonds also occurs).. Its function is as follows. Cleaves peptides in various proteins in a process that requires ATP hydrolysis. Has a chymotrypsin-like activity. Plays a major role in the degradation of misfolded proteins. The sequence is that of ATP-dependent Clp protease proteolytic subunit from Campylobacter jejuni subsp. jejuni serotype O:23/36 (strain 81-176).